Here is a 212-residue protein sequence, read N- to C-terminus: uncharacterized protein (212 aa).

Positions 53 and 74 each coordinate S-adenosyl-L-methionine.

Belongs to the methyltransferase superfamily. YrrT family.

In terms of biological role, could be a S-adenosyl-L-methionine-dependent methyltransferase. This is an uncharacterized protein from Exiguobacterium sibiricum (strain DSM 17290 / CCUG 55495 / CIP 109462 / JCM 13490 / 255-15).